We begin with the raw amino-acid sequence, 209 residues long: Small ribosomal subunit protein uS4 (209 aa).

Positions 98–166 (RRLDNVVYRL…IKQAIELNKG (69 aa)) constitute an S4 RNA-binding domain.

It belongs to the universal ribosomal protein uS4 family. As to quaternary structure, part of the 30S ribosomal subunit. Contacts protein S5. The interaction surface between S4 and S5 is involved in control of translational fidelity.

In terms of biological role, one of the primary rRNA binding proteins, it binds directly to 16S rRNA where it nucleates assembly of the body of the 30S subunit. Functionally, with S5 and S12 plays an important role in translational accuracy. The polypeptide is Small ribosomal subunit protein uS4 (Fervidobacterium nodosum (strain ATCC 35602 / DSM 5306 / Rt17-B1)).